The primary structure comprises 127 residues: Holo-[acyl-carrier-protein] synthase (127 aa).

Residues Asp8 and Glu56 each contribute to the Mg(2+) site.

Belongs to the P-Pant transferase superfamily. AcpS family. Mg(2+) is required as a cofactor.

It localises to the cytoplasm. It catalyses the reaction apo-[ACP] + CoA = holo-[ACP] + adenosine 3',5'-bisphosphate + H(+). In terms of biological role, transfers the 4'-phosphopantetheine moiety from coenzyme A to a Ser of acyl-carrier-protein. The protein is Holo-[acyl-carrier-protein] synthase of Cytophaga hutchinsonii (strain ATCC 33406 / DSM 1761 / CIP 103989 / NBRC 15051 / NCIMB 9469 / D465).